We begin with the raw amino-acid sequence, 55 residues long: Large ribosomal subunit protein bL32c (55 aa).

This sequence belongs to the bacterial ribosomal protein bL32 family.

It localises to the plastid. It is found in the chloroplast. In Daucus carota (Wild carrot), this protein is Large ribosomal subunit protein bL32c.